Reading from the N-terminus, the 112-residue chain is Transcriptional regulator WhiD (112 aa).

A 4Fe-4S Wbl-type domain is found at 22–86 (ACRGVDSSLF…GGLTEDEREE (65 aa)). Cys-23, Cys-53, Cys-56, and Cys-62 together coordinate [4Fe-4S] cluster.

The protein belongs to the WhiB family. The 4Fe-4S form is a monomer; upon oxidation forms a disulfide-bonded homodimer. [4Fe-4S] cluster serves as cofactor. Can be nitrosylated by NO, 8 NO react per cluster. These complexes are quite stable under anaerobic conditions, but degrade slowly aerobically. Post-translationally, upon Fe-S cluster removal intramolecular disulfide bonds are formed.

The protein localises to the cytoplasm. Acts as a transcriptional regulator. Probably redox-responsive. The apo- but not holo-form probably binds DNA. Plays a positive role in prespore maturation and the initiation of sporulation septation. This Streptomyces coelicolor (strain ATCC BAA-471 / A3(2) / M145) protein is Transcriptional regulator WhiD (whiD).